The chain runs to 249 residues: Exosome complex component Rrp41 (249 aa).

Belongs to the RNase PH family. Rrp41 subfamily. Component of the archaeal exosome complex. Forms a hexameric ring-like arrangement composed of 3 Rrp41-Rrp42 heterodimers. The hexameric ring associates with a trimer of Rrp4 and/or Csl4 subunits.

The protein resides in the cytoplasm. Its function is as follows. Catalytic component of the exosome, which is a complex involved in RNA degradation. Has 3'-&gt;5' exoribonuclease activity. Can also synthesize heteromeric RNA-tails. This is Exosome complex component Rrp41 from Pyrococcus horikoshii (strain ATCC 700860 / DSM 12428 / JCM 9974 / NBRC 100139 / OT-3).